The sequence spans 222 residues: 3-demethoxyubiquinol 3-hydroxylase (222 aa).

Fe cation is bound by residues glutamate 71, glutamate 101, histidine 104, glutamate 153, glutamate 185, and histidine 188.

It belongs to the COQ7 family. The cofactor is Fe cation.

The protein resides in the cell membrane. The enzyme catalyses a 5-methoxy-2-methyl-3-(all-trans-polyprenyl)benzene-1,4-diol + AH2 + O2 = a 3-demethylubiquinol + A + H2O. It functions in the pathway cofactor biosynthesis; ubiquinone biosynthesis. Functionally, catalyzes the hydroxylation of 2-nonaprenyl-3-methyl-6-methoxy-1,4-benzoquinol during ubiquinone biosynthesis. This chain is 3-demethoxyubiquinol 3-hydroxylase, found in Bordetella bronchiseptica (strain ATCC BAA-588 / NCTC 13252 / RB50) (Alcaligenes bronchisepticus).